Consider the following 163-residue polypeptide: 6,7-dimethyl-8-ribityllumazine synthase (163 aa).

Residues Phe27, 58-60 (ALE), and 87-89 (CVV) each bind 5-amino-6-(D-ribitylamino)uracil. 92–93 (DT) contacts (2S)-2-hydroxy-3-oxobutyl phosphate. The active-site Proton donor is the His95. Asn120 is a 5-amino-6-(D-ribitylamino)uracil binding site. Arg134 contacts (2S)-2-hydroxy-3-oxobutyl phosphate.

It belongs to the DMRL synthase family.

It carries out the reaction (2S)-2-hydroxy-3-oxobutyl phosphate + 5-amino-6-(D-ribitylamino)uracil = 6,7-dimethyl-8-(1-D-ribityl)lumazine + phosphate + 2 H2O + H(+). It participates in cofactor biosynthesis; riboflavin biosynthesis; riboflavin from 2-hydroxy-3-oxobutyl phosphate and 5-amino-6-(D-ribitylamino)uracil: step 1/2. Functionally, catalyzes the formation of 6,7-dimethyl-8-ribityllumazine by condensation of 5-amino-6-(D-ribitylamino)uracil with 3,4-dihydroxy-2-butanone 4-phosphate. This is the penultimate step in the biosynthesis of riboflavin. The sequence is that of 6,7-dimethyl-8-ribityllumazine synthase from Nitrobacter hamburgensis (strain DSM 10229 / NCIMB 13809 / X14).